The primary structure comprises 853 residues: DNA (cytosine-5)-methyltransferase 3B (853 aa).

The span at 1 to 20 (MKGDTRHLNGEEDAGGREDS) shows a compositional bias: basic and acidic residues. The interval 1–218 (MKGDTRHLNG…SGDGDSSEYQ (218 aa)) is disordered. The interval 1 to 298 (MKGDTRHLNG…LATFNKLVSY (298 aa)) is interaction with DNMT1 and DNMT3A. A compositionally biased stretch (acidic residues) spans 72–81 (GDGDGEDGDG). Residue serine 82 is modified to Phosphoserine. Lysine 89 participates in a covalent cross-link: Glycyl lysine isopeptide (Lys-Gly) (interchain with G-Cter in SUMO2). Threonine 96 is subject to Phosphothreonine. Phosphoserine is present on residues serine 100 and serine 110. Residues 115-130 (ERHRPSPRSTRGRQGR) show a composition bias toward basic residues. Residues serine 136, serine 195, serine 202, and serine 209 each carry the phosphoserine modification. Residues 179 to 199 (GTPQSSSTPYARLAQDSQQGG) show a composition bias toward polar residues. A PWWP domain is found at 225-283 (IGDLVWGKIKGFSWWPAMVVSWKATSKRQAMSGMRWVQWFGDGKFSEVSADKLVALGLF). The disordered stretch occupies residues 341–423 (KPTGIEGLKP…DQSREQMASD (83 aa)). Basic and acidic residues-rich tracts occupy residues 368–385 (RKLESRKYENKTRRRTAD) and 407–417 (GKDRGDEDQSR). Arginine 410 carries the citrulline modification. Positions 423–555 (DVANNKSSLE…LQAFFTSDTG (133 aa)) constitute an ADD domain. A GATA-type; atypical zinc finger spans residues 434 to 464 (GCLSCGRKNPVSFHPLFEGGLCQTCRDRFLE). The interval 435–527 (CLSCGRKNPV…LQEPWSCYMC (93 aa)) is interaction with the PRC2/EED-EZH2 complex. The PHD-type; atypical zinc finger occupies 475–531 (QSYCTVCCEGRELLLCSNTSCCRCFCVECLEVLVGTGTAAEAKLQEPWSCYMCLPQR). Positions 575 to 853 (IRVLSLFDGI…APLKDYFACE (279 aa)) constitute an SAM-dependent MTase C5-type domain. Residues 582–586 (DGIAT) and glutamate 605 each bind S-adenosyl-L-methionine. Lysine 617 participates in a covalent cross-link: Glycyl lysine isopeptide (Lys-Gly) (interchain with G-Cter in SUMO2). Position 627-629 (627-629 (DVR)) interacts with S-adenosyl-L-methionine. Cysteine 651 is an active-site residue. 832 to 834 (RSW) is an S-adenosyl-L-methionine binding site.

This sequence belongs to the class I-like SAM-binding methyltransferase superfamily. C5-methyltransferase family. Interacts with BAZ2A/TIP5, SUV39H1 and CBX4. Interacts with UHRF1. Interacts with DNMT1 and DNMT3A, SETDB1, UBL1, UBE2I9 and ZHX1. Interacts with the PRC2/EED-EZH2 complex. In terms of processing, sumoylated. Citrullinated by PADI4. In terms of tissue distribution, ubiquitous; highly expressed in fetal liver, heart, kidney, placenta, and at lower levels in spleen, colon, brain, liver, small intestine, lung, peripheral blood mononuclear cells, and skeletal muscle. Isoform 1 is expressed in all tissues except brain, skeletal muscle and PBMC, 3 is ubiquitous, 4 is expressed in all tissues except brain, skeletal muscle, lung and prostate and 5 is detectable only in testis and at very low level in brain and prostate.

The protein resides in the nucleus. It carries out the reaction a 2'-deoxycytidine in DNA + S-adenosyl-L-methionine = a 5-methyl-2'-deoxycytidine in DNA + S-adenosyl-L-homocysteine + H(+). Activated by binding to the regulatory factor DNMT3L. Its function is as follows. Required for genome-wide de novo methylation and is essential for the establishment of DNA methylation patterns during development. DNA methylation is coordinated with methylation of histones. May preferentially methylates nucleosomal DNA within the nucleosome core region. May function as transcriptional co-repressor by associating with CBX4 and independently of DNA methylation. Seems to be involved in gene silencing. In association with DNMT1 and via the recruitment of CTCFL/BORIS, involved in activation of BAG1 gene expression by modulating dimethylation of promoter histone H3 at H3K4 and H3K9. Isoforms 4 and 5 are probably not functional due to the deletion of two conserved methyltransferase motifs. Functions as a transcriptional corepressor by associating with ZHX1. Required for DUX4 silencing in somatic cells. In Homo sapiens (Human), this protein is DNA (cytosine-5)-methyltransferase 3B (DNMT3B).